A 162-amino-acid polypeptide reads, in one-letter code: Protein mmf1, mitochondrial (162 aa).

It belongs to the RutC family.

It localises to the mitochondrion. The protein resides in the cytoplasm. In terms of biological role, plays a role in the maintenance of mitochondrial DNA. This Schizosaccharomyces pombe (strain 972 / ATCC 24843) (Fission yeast) protein is Protein mmf1, mitochondrial (mmf1).